Reading from the N-terminus, the 196-residue chain is Glycerol-3-phosphate acyltransferase (196 aa).

4 helical membrane passes run 4-24 (LTLL…AVVI), 80-100 (PFFL…PLYF), 114-134 (AMFP…LLVF), and 155-175 (AYWI…LILW).

It belongs to the PlsY family. As to quaternary structure, probably interacts with PlsX.

It localises to the cell inner membrane. It catalyses the reaction an acyl phosphate + sn-glycerol 3-phosphate = a 1-acyl-sn-glycero-3-phosphate + phosphate. The protein operates within lipid metabolism; phospholipid metabolism. Functionally, catalyzes the transfer of an acyl group from acyl-phosphate (acyl-PO(4)) to glycerol-3-phosphate (G3P) to form lysophosphatidic acid (LPA). This enzyme utilizes acyl-phosphate as fatty acyl donor, but not acyl-CoA or acyl-ACP. In Idiomarina loihiensis (strain ATCC BAA-735 / DSM 15497 / L2-TR), this protein is Glycerol-3-phosphate acyltransferase.